The chain runs to 211 residues: UPF0637 protein BLi01683/BL05149 (211 aa).

This sequence belongs to the UPF0637 family.

This Bacillus licheniformis (strain ATCC 14580 / DSM 13 / JCM 2505 / CCUG 7422 / NBRC 12200 / NCIMB 9375 / NCTC 10341 / NRRL NRS-1264 / Gibson 46) protein is UPF0637 protein BLi01683/BL05149.